The chain runs to 179 residues: Large ribosomal subunit protein uL5 (179 aa).

The protein belongs to the universal ribosomal protein uL5 family. As to quaternary structure, part of the 50S ribosomal subunit; part of the 5S rRNA/L5/L18/L25 subcomplex. Contacts the 5S rRNA and the P site tRNA. Forms a bridge to the 30S subunit in the 70S ribosome.

Its function is as follows. This is one of the proteins that bind and probably mediate the attachment of the 5S RNA into the large ribosomal subunit, where it forms part of the central protuberance. In the 70S ribosome it contacts protein S13 of the 30S subunit (bridge B1b), connecting the 2 subunits; this bridge is implicated in subunit movement. Contacts the P site tRNA; the 5S rRNA and some of its associated proteins might help stabilize positioning of ribosome-bound tRNAs. This Maridesulfovibrio salexigens (strain ATCC 14822 / DSM 2638 / NCIMB 8403 / VKM B-1763) (Desulfovibrio salexigens) protein is Large ribosomal subunit protein uL5.